Here is a 375-residue protein sequence, read N- to C-terminus: Putative F-box protein At1g12190 (375 aa).

The F-box domain maps to 1–46 (MACVKFPWELMEEILYRVPSLSLSRFKTVSKEWNTLLNDKTFIKKH).

The sequence is that of Putative F-box protein At1g12190 from Arabidopsis thaliana (Mouse-ear cress).